A 502-amino-acid polypeptide reads, in one-letter code: Probable glycine dehydrogenase (decarboxylating) subunit 2 (502 aa).

Lys-273 is subject to N6-(pyridoxal phosphate)lysine.

It belongs to the GcvP family. C-terminal subunit subfamily. In terms of assembly, the glycine cleavage system is composed of four proteins: P, T, L and H. In this organism, the P 'protein' is a heterodimer of two subunits. Pyridoxal 5'-phosphate serves as cofactor.

It catalyses the reaction N(6)-[(R)-lipoyl]-L-lysyl-[glycine-cleavage complex H protein] + glycine + H(+) = N(6)-[(R)-S(8)-aminomethyldihydrolipoyl]-L-lysyl-[glycine-cleavage complex H protein] + CO2. The glycine cleavage system catalyzes the degradation of glycine. The P protein binds the alpha-amino group of glycine through its pyridoxal phosphate cofactor; CO(2) is released and the remaining methylamine moiety is then transferred to the lipoamide cofactor of the H protein. The chain is Probable glycine dehydrogenase (decarboxylating) subunit 2 from Staphylococcus epidermidis (strain ATCC 35984 / DSM 28319 / BCRC 17069 / CCUG 31568 / BM 3577 / RP62A).